The following is a 242-amino-acid chain: NAD-dependent protein deacetylase 1 (242 aa).

A Deacetylase sirtuin-type domain is found at 1-242; the sequence is MTITSWLAAS…LNEQLAEVDP (242 aa). The NAD(+) site is built by Ala19, Thr23, Phe30, Arg31, Gln97, Val99, Asp100, and His115. A nicotinamide-binding site is contributed by Phe30. Residues Val99 and Asp100 each contribute to the nicotinamide site. His115 serves as the catalytic Proton acceptor. Residues Cys123, Cys126, Cys142, and Cys144 each coordinate Zn(2+). Residues Ser182, Ser183, Asn207, and Ile226 each coordinate NAD(+).

It belongs to the sirtuin family. Class U subfamily. The cofactor is Zn(2+).

It localises to the cytoplasm. It carries out the reaction N(6)-acetyl-L-lysyl-[protein] + NAD(+) + H2O = 2''-O-acetyl-ADP-D-ribose + nicotinamide + L-lysyl-[protein]. Its function is as follows. NAD-dependent protein deacetylase which modulates the activities of several enzymes which are inactive in their acetylated form. This Geobacillus kaustophilus (strain HTA426) protein is NAD-dependent protein deacetylase 1.